The sequence spans 282 residues: ATP phosphoribosyltransferase (282 aa).

It belongs to the ATP phosphoribosyltransferase family. Long subfamily. Mg(2+) serves as cofactor.

The protein resides in the cytoplasm. The enzyme catalyses 1-(5-phospho-beta-D-ribosyl)-ATP + diphosphate = 5-phospho-alpha-D-ribose 1-diphosphate + ATP. The protein operates within amino-acid biosynthesis; L-histidine biosynthesis; L-histidine from 5-phospho-alpha-D-ribose 1-diphosphate: step 1/9. Its activity is regulated as follows. Feedback inhibited by histidine. In terms of biological role, catalyzes the condensation of ATP and 5-phosphoribose 1-diphosphate to form N'-(5'-phosphoribosyl)-ATP (PR-ATP). Has a crucial role in the pathway because the rate of histidine biosynthesis seems to be controlled primarily by regulation of HisG enzymatic activity. The protein is ATP phosphoribosyltransferase of Pyrobaculum calidifontis (strain DSM 21063 / JCM 11548 / VA1).